A 435-amino-acid chain; its full sequence is ATP-dependent RNA helicase RhlB (435 aa).

The Q motif signature appears at Q9–A37. In terms of domain architecture, Helicase ATP-binding spans L40–V219. ATP is bound at residue A53–T60. The DEAD box signature appears at D165–D168. Residues A245–I390 enclose the Helicase C-terminal domain. A disordered region spans residues A395–A435. Polar residues predominate over residues S401–G413. The span at N422–A435 shows a compositional bias: basic residues.

This sequence belongs to the DEAD box helicase family. RhlB subfamily. In terms of assembly, component of the RNA degradosome, which is a multiprotein complex involved in RNA processing and mRNA degradation.

The protein resides in the cytoplasm. The enzyme catalyses ATP + H2O = ADP + phosphate + H(+). In terms of biological role, DEAD-box RNA helicase involved in RNA degradation. Has RNA-dependent ATPase activity and unwinds double-stranded RNA. The polypeptide is ATP-dependent RNA helicase RhlB (Vibrio vulnificus (strain YJ016)).